We begin with the raw amino-acid sequence, 117 residues long: Large ribosomal subunit protein uL18 (117 aa).

This sequence belongs to the universal ribosomal protein uL18 family. As to quaternary structure, part of the 50S ribosomal subunit; part of the 5S rRNA/L5/L18/L25 subcomplex. Contacts the 5S and 23S rRNAs.

Functionally, this is one of the proteins that bind and probably mediate the attachment of the 5S RNA into the large ribosomal subunit, where it forms part of the central protuberance. This is Large ribosomal subunit protein uL18 from Colwellia psychrerythraea (strain 34H / ATCC BAA-681) (Vibrio psychroerythus).